A 395-amino-acid chain; its full sequence is Ribose-phosphate pyrophosphokinase 2, chloroplastic (395 aa).

Positions 1 to 23 (MASPAPRSLSSSSSSSSSSFCPS) are enriched in low complexity. The tract at residues 1–33 (MASPAPRSLSSSSSSSSSSFCPSISPPPRSPSR) is disordered. The N-terminal 42 residues, 1-42 (MASPAPRSLSSSSSSSSSSFCPSISPPPRSPSRASLPFSVKC), are a transit peptide targeting the chloroplast. 4 residues coordinate Mg(2+): aspartate 209, histidine 211, aspartate 220, and aspartate 224. The tract at residues 295–310 (GKVAVMLDDMIDTAGT) is binding of phosphoribosylpyrophosphate.

It belongs to the ribose-phosphate pyrophosphokinase family.

It is found in the plastid. The protein localises to the chloroplast. The catalysed reaction is D-ribose 5-phosphate + ATP = 5-phospho-alpha-D-ribose 1-diphosphate + AMP + H(+). The sequence is that of Ribose-phosphate pyrophosphokinase 2, chloroplastic (PRS2) from Spinacia oleracea (Spinach).